Consider the following 304-residue polypeptide: Porphobilinogen deaminase (304 aa).

Residue Cys240 is modified to S-(dipyrrolylmethanemethyl)cysteine.

Belongs to the HMBS family. Monomer. It depends on dipyrromethane as a cofactor.

It catalyses the reaction 4 porphobilinogen + H2O = hydroxymethylbilane + 4 NH4(+). The protein operates within porphyrin-containing compound metabolism; protoporphyrin-IX biosynthesis; coproporphyrinogen-III from 5-aminolevulinate: step 2/4. In terms of biological role, tetrapolymerization of the monopyrrole PBG into the hydroxymethylbilane pre-uroporphyrinogen in several discrete steps. The chain is Porphobilinogen deaminase from Xanthomonas oryzae pv. oryzae (strain MAFF 311018).